The sequence spans 284 residues: Undecaprenyl-diphosphatase (284 aa).

The next 8 membrane-spanning stretches (helical) occupy residues 7-27 (IILGIIEGITEWLPISSTGHL), 44-64 (EMFDVVIQLGAILSVVVLYFH), 90-110 (LWLKVLIAALPAAIIGLPLND), 116-136 (FYHFVPVAFMLIIYGVAFIVI), 167-187 (VLSLLPGTSRSGATIVGALLI), 197-217 (FTFFLGIPVMFGASFIKILHF), 229-249 (FGVLLVACLVAFGVSMVAIKF), and 259-279 (FTFFGKYRIVLGIVLLIYAAF).

The protein belongs to the UppP family.

The protein resides in the cell membrane. It catalyses the reaction di-trans,octa-cis-undecaprenyl diphosphate + H2O = di-trans,octa-cis-undecaprenyl phosphate + phosphate + H(+). In terms of biological role, catalyzes the dephosphorylation of undecaprenyl diphosphate (UPP). Confers resistance to bacitracin. This is Undecaprenyl-diphosphatase from Lactococcus lactis subsp. cremoris (strain MG1363).